A 498-amino-acid chain; its full sequence is U4/U6 small nuclear ribonucleoprotein Prp31 (498 aa).

The disordered stretch occupies residues 1–24; it reads MSLADELLADLEEAAEEEEENLID. The span at 7–24 shows a compositional bias: acidic residues; that stretch reads LLADLEEAAEEEEENLID. Coiled coils occupy residues 84–119 and 180–214; these read EAAPEYKVIVDANNLTVEIENELNIIHKFIRDKYSK and DEELERIEEACDMALELNQSKHRIYEYVESRMSFI. In terms of domain architecture, Nop spans 214-332; that stretch reads IAPNLSIIVG…IERKFDKWQE (119 aa). The interval 333–356 is disordered; that stretch reads PPPVKQVKPLPAPLDGQRKKRGGR. Residues 350–363 carry the Nuclear localization signal (NLS) motif; sequence RKKRGGRRYRKMKE.

The protein belongs to the PRP31 family. Identified in the spliceosome B complex. Component of the U4/U6-U5 tri-snRNP complex. Component of some MLL1/MLL complex.

The protein localises to the nucleus. Its subcellular location is the nucleus speckle. It is found in the cajal body. In terms of biological role, involved in pre-mRNA splicing as component of the spliceosome. Required for the assembly of the U4/U5/U6 tri-snRNP complex, one of the building blocks of the spliceosome. The sequence is that of U4/U6 small nuclear ribonucleoprotein Prp31 (prpf31) from Xenopus laevis (African clawed frog).